We begin with the raw amino-acid sequence, 188 residues long: Elongation factor P (188 aa).

The protein belongs to the elongation factor P family.

The protein resides in the cytoplasm. Its pathway is protein biosynthesis; polypeptide chain elongation. Its function is as follows. Involved in peptide bond synthesis. Stimulates efficient translation and peptide-bond synthesis on native or reconstituted 70S ribosomes in vitro. Probably functions indirectly by altering the affinity of the ribosome for aminoacyl-tRNA, thus increasing their reactivity as acceptors for peptidyl transferase. In Aeromonas hydrophila subsp. hydrophila (strain ATCC 7966 / DSM 30187 / BCRC 13018 / CCUG 14551 / JCM 1027 / KCTC 2358 / NCIMB 9240 / NCTC 8049), this protein is Elongation factor P.